The chain runs to 193 residues: Interleukin-23 subunit alpha (193 aa).

An N-terminal signal peptide occupies residues 1-22 (MLGSRAVMLMLLLLLLPWTSQG).

It belongs to the IL-6 superfamily. In terms of assembly, heterodimer with IL12B; disulfide-linked. The heterodimer is known as interleukin IL-23. Interacts with IL23R; this interaction enables recruitment of IL12RB1.

It localises to the secreted. Functionally, associates with IL12B to form the pro-inflammatory cytokine IL-23 that plays different roles in innate and adaptive immunity. Released by antigen-presenting cells such as dendritic cells or macrophages, binds to a heterodimeric receptor complex composed of IL12RB1 and IL23R to activate JAK2 and TYK2 which then phosphorylate the receptor to form a docking site leading to the phosphorylation of STAT3 and STAT4. This process leads to activation of several pathways including p38 MAPK or NF-kappa-B and promotes the production of pro-inflammatory cytokines such as interleukin-17A/IL17A. In turn, participates in the early and effective intracellular bacterial clearance. Promotes the expansion and survival of T-helper 17 cells, a CD4-positive helper T-cell subset that produces IL-17, as well as other IL-17-producing cells. The chain is Interleukin-23 subunit alpha (IL23A) from Sus scrofa (Pig).